A 335-amino-acid polypeptide reads, in one-letter code: Succinylglutamate desuccinylase (335 aa).

The Zn(2+) site is built by His-59, Glu-62, and His-151. Glu-215 is a catalytic residue.

It belongs to the AspA/AstE family. Succinylglutamate desuccinylase subfamily. The cofactor is Zn(2+).

It catalyses the reaction N-succinyl-L-glutamate + H2O = L-glutamate + succinate. It functions in the pathway amino-acid degradation; L-arginine degradation via AST pathway; L-glutamate and succinate from L-arginine: step 5/5. Functionally, transforms N(2)-succinylglutamate into succinate and glutamate. The chain is Succinylglutamate desuccinylase from Pseudomonas putida (strain ATCC 47054 / DSM 6125 / CFBP 8728 / NCIMB 11950 / KT2440).